The sequence spans 360 residues: 3-isopropylmalate dehydrogenase (360 aa).

NAD(+) is bound at residue 76-89 (GPKWDKIERDIRPE). Positions 96, 106, 134, and 224 each coordinate substrate. The Mg(2+) site is built by Asp224, Asp248, and Asp252. 282-294 (GSAPDIAGLGIAN) lines the NAD(+) pocket.

This sequence belongs to the isocitrate and isopropylmalate dehydrogenases family. LeuB type 1 subfamily. As to quaternary structure, homodimer. Mg(2+) serves as cofactor. Requires Mn(2+) as cofactor.

It is found in the cytoplasm. The enzyme catalyses (2R,3S)-3-isopropylmalate + NAD(+) = 4-methyl-2-oxopentanoate + CO2 + NADH. The protein operates within amino-acid biosynthesis; L-leucine biosynthesis; L-leucine from 3-methyl-2-oxobutanoate: step 3/4. Its function is as follows. Catalyzes the oxidation of 3-carboxy-2-hydroxy-4-methylpentanoate (3-isopropylmalate) to 3-carboxy-4-methyl-2-oxopentanoate. The product decarboxylates to 4-methyl-2 oxopentanoate. The chain is 3-isopropylmalate dehydrogenase from Pseudomonas putida (strain ATCC 47054 / DSM 6125 / CFBP 8728 / NCIMB 11950 / KT2440).